Reading from the N-terminus, the 238-residue chain is Valine-rich protein (238 aa).

The signal sequence occupies residues 1 to 16 (MQAVLLVVALFGAALA).

Prismatic layer of shell (at protein level). Expressed primarily in the mantle with highest level in the mantle edge and lower level in the mantle pallium.

The protein localises to the secreted. The chain is Valine-rich protein from Pinctada maxima (Silver-lipped pearl oyster).